The following is a 229-amino-acid chain: MSKNSVIIVAAGKGKRMNSSISKQFLQIKNKPILYYTLNKFSTHESIDEIVLVALEDKIEVCSDIIDKYNINKVSKIVPGGKERQDSVYNGLKAVSKDCEVVLIHDAARPFVTSDIIENGIRYVNQYGAAACGVIPKDTVKIKDEKGFAIDTPNREDLFIVQTPQCFNYNIILDCHEKLKKHNKKVTDDTMVLENYGKSVYLYEGSYSNIKITTPEDLILGEQILEKLT.

Belongs to the IspD/TarI cytidylyltransferase family. IspD subfamily.

It catalyses the reaction 2-C-methyl-D-erythritol 4-phosphate + CTP + H(+) = 4-CDP-2-C-methyl-D-erythritol + diphosphate. It functions in the pathway isoprenoid biosynthesis; isopentenyl diphosphate biosynthesis via DXP pathway; isopentenyl diphosphate from 1-deoxy-D-xylulose 5-phosphate: step 2/6. Functionally, catalyzes the formation of 4-diphosphocytidyl-2-C-methyl-D-erythritol from CTP and 2-C-methyl-D-erythritol 4-phosphate (MEP). The chain is 2-C-methyl-D-erythritol 4-phosphate cytidylyltransferase from Clostridium botulinum (strain 657 / Type Ba4).